A 500-amino-acid chain; its full sequence is Glucokinase-1 (500 aa).

Ser2 is subject to N-acetylserine. At Ser2 the chain carries Phosphoserine. The Hexokinase domain maps to Arg12–Leu498. Residues Asn74–Thr216 are hexokinase small subdomain. Lys110 lines the ATP pocket. Residues Lys158–Phe184 form a glucose-binding region. Positions Asn217–Asp487 are hexokinase large subdomain. Ser470 is modified (phosphoserine). Asp487–Gly492 is a binding site for ATP.

This sequence belongs to the hexokinase family. As to quaternary structure, monomer.

It catalyses the reaction D-glucose + ATP = D-glucose 6-phosphate + ADP + H(+). It participates in carbohydrate metabolism; hexose metabolism. The protein operates within carbohydrate degradation; glycolysis; D-glyceraldehyde 3-phosphate and glycerone phosphate from D-glucose: step 1/4. Two isoenzymes, hexokinase-1 and hexokinase-2, can phosphorylate keto- and aldohexoses in yeast, whereas a third isoenzyme, GLK, is specific for aldohexoses. All glucose phosphorylating enzymes are involved in glucose uptake. This is Glucokinase-1 (GLK1) from Saccharomyces cerevisiae (strain ATCC 204508 / S288c) (Baker's yeast).